The sequence spans 273 residues: Progestin and adipoQ receptor family member 4 (273 aa).

6 helical membrane passes run 52-72 (IYTH…TMPW), 79-99 (GWLG…SVLY), 115-135 (LLAL…LPII), 147-167 (PAAL…ALTA), 185-205 (LLVF…SLPC), and 245-265 (LLSV…LLWA).

This sequence belongs to the ADIPOR family. In terms of assembly, interacts with CERS2 and CERS5; the interaction regulates CERS2 and CERS5 stabilities and activities and is inhibited in presence of ceramides. Relatively widely expressed in a range of tissues. Expressed in subcutaneous white adipose tissue.

The protein localises to the golgi apparatus membrane. In terms of biological role, plays a role in maintaining adipose tissue function through the regulation of ceramide levels. Mediates the stability of ceramide synthetases, CERS2 and CERS5, and their activities. The protein is Progestin and adipoQ receptor family member 4 of Homo sapiens (Human).